The primary structure comprises 1019 residues: UPF0182 protein Tery_0938 (1019 aa).

9 consecutive transmembrane segments (helical) span residues I23–T43, T67–L87, L128–L148, L192–W212, L213–A233, F270–S290, L313–L333, Y355–F375, and A416–V436.

This sequence belongs to the UPF0182 family.

The protein resides in the cell membrane. This is UPF0182 protein Tery_0938 from Trichodesmium erythraeum (strain IMS101).